We begin with the raw amino-acid sequence, 401 residues long: Subtilisin-like protease 10 (401 aa).

The N-terminal stretch at M1 to A19 is a signal peptide. Positions A20 to Q116 are excised as a propeptide. Residues S35–M112 enclose the Inhibitor I9 domain. Positions S126 to Q401 constitute a Peptidase S8 domain. Catalysis depends on charge relay system residues D158 and H189. N-linked (GlcNAc...) asparagine glycosylation occurs at N250. The active-site Charge relay system is S347. N397 carries an N-linked (GlcNAc...) asparagine glycan.

This sequence belongs to the peptidase S8 family.

Its subcellular location is the secreted. In terms of biological role, secreted subtilisin-like serine protease with keratinolytic activity that contributes to pathogenicity. The protein is Subtilisin-like protease 10 (SUB10) of Arthroderma otae (strain ATCC MYA-4605 / CBS 113480) (Microsporum canis).